Consider the following 454-residue polypeptide: 3-phosphoshikimate 1-carboxyvinyltransferase (454 aa).

The tract at residues Met-1–Pro-31 is disordered. 3-phosphoshikimate contacts are provided by Lys-34, Ser-35, and Arg-39. A phosphoenolpyruvate-binding site is contributed by Lys-34. Gly-107 and Arg-135 together coordinate phosphoenolpyruvate. The 3-phosphoshikimate site is built by Ser-180, Gln-182, Asp-334, and Lys-361. Gln-182 contacts phosphoenolpyruvate. Asp-334 serves as the catalytic Proton acceptor. 2 residues coordinate phosphoenolpyruvate: Arg-365 and Arg-409.

Belongs to the EPSP synthase family. As to quaternary structure, monomer.

Its subcellular location is the cytoplasm. It carries out the reaction 3-phosphoshikimate + phosphoenolpyruvate = 5-O-(1-carboxyvinyl)-3-phosphoshikimate + phosphate. The protein operates within metabolic intermediate biosynthesis; chorismate biosynthesis; chorismate from D-erythrose 4-phosphate and phosphoenolpyruvate: step 6/7. In terms of biological role, catalyzes the transfer of the enolpyruvyl moiety of phosphoenolpyruvate (PEP) to the 5-hydroxyl of shikimate-3-phosphate (S3P) to produce enolpyruvyl shikimate-3-phosphate and inorganic phosphate. The sequence is that of 3-phosphoshikimate 1-carboxyvinyltransferase from Granulibacter bethesdensis (strain ATCC BAA-1260 / CGDNIH1).